Here is a 259-residue protein sequence, read N- to C-terminus: MNLLEKTRKINAMLQNAAGKPVNFKEMAETLCEVIEANVFVLSRRGKLLGFAIKQTIENERMKKMLADRQFPEEYTKNLFNITETSPNLDINSEYTAFPVENKDLFKNGLTTIVPIIGGGERLGTLILSRLDKEFHDDDLILAEYGATVVGMEILREKAEEIEEEARSKAVVQMAISSLSYSELEAIEHIFEELDGTEGLLVASKIADRVGITRSVIVNALRKLESAGVIESRSLGMKGTYIKVLNDKFLTELEKLKHH.

Residues 1–155 (MNLLEKTRKI…GATVVGMEIL (155 aa)) are GAF domain. Positions 203–222 (ASKIADRVGITRSVIVNALR) form a DNA-binding region, H-T-H motif. Ser-215 carries the phosphoserine modification.

The protein belongs to the CodY family.

Its subcellular location is the cytoplasm. DNA-binding global transcriptional regulator which is involved in the adaptive response to starvation and acts by directly or indirectly controlling the expression of numerous genes in response to nutrient availability. During rapid exponential growth, CodY is highly active and represses genes whose products allow adaptation to nutrient depletion. This chain is Global transcriptional regulator CodY, found in Anoxybacillus flavithermus (strain DSM 21510 / WK1).